The chain runs to 428 residues: GTPase Obg (428 aa).

The region spanning 1 to 158 (MFVDQVQVEV…RFIKLELKVL (158 aa)) is the Obg domain. An OBG-type G domain is found at 159–333 (ADVGLVGFPS…LMHKTAEVLK (175 aa)). GTP-binding positions include 165–172 (GFPSVGKS), 190–194 (FTTLV), 212–215 (DLPG), 282–285 (TKMD), and 314–316 (SSL). Residues Ser-172 and Thr-192 each coordinate Mg(2+). Residues 350-428 (YKYQPEPALK…IDDFTFEFVE (79 aa)) form the OCT domain.

This sequence belongs to the TRAFAC class OBG-HflX-like GTPase superfamily. OBG GTPase family. In terms of assembly, monomer. Requires Mg(2+) as cofactor.

The protein resides in the cytoplasm. An essential GTPase which binds GTP, GDP and possibly (p)ppGpp with moderate affinity, with high nucleotide exchange rates and a fairly low GTP hydrolysis rate. Plays a role in control of the cell cycle, stress response, ribosome biogenesis and in those bacteria that undergo differentiation, in morphogenesis control. This chain is GTPase Obg, found in Lacticaseibacillus casei (strain BL23) (Lactobacillus casei).